The following is a 110-amino-acid chain: Translation initiation factor 1A 3 (110 aa).

A disordered region spans residues 1–29; it reads MIRKRQSGSNKSVSSGNNQEVTRVRTPRK. Low complexity predominate over residues 7 to 18; it reads SGSNKSVSSGNN. The S1-like domain occupies 22–96; sequence TRVRTPRKDR…SKADVIWKYT (75 aa).

It belongs to the eIF-1A family.

Functionally, seems to be required for maximal rate of protein biosynthesis. Enhances ribosome dissociation into subunits and stabilizes the binding of the initiator Met-tRNA(I) to 40 S ribosomal subunits. In Methanosarcina acetivorans (strain ATCC 35395 / DSM 2834 / JCM 12185 / C2A), this protein is Translation initiation factor 1A 3 (eIF1A3).